Consider the following 248-residue polypeptide: PF03932 family protein CutC (248 aa).

This sequence belongs to the CutC family. As to quaternary structure, homodimer.

It is found in the cytoplasm. The sequence is that of PF03932 family protein CutC from Salmonella enteritidis PT4 (strain P125109).